The primary structure comprises 369 residues: Queuine tRNA-ribosyltransferase accessory subunit 2 (369 aa).

The tract at residues 263 to 282 (SSKLTEVEEENGNDSSNDQD) is disordered. Residues Cys-308, Cys-310, Cys-313, and His-339 each contribute to the Zn(2+) site.

This sequence belongs to the queuine tRNA-ribosyltransferase family. QTRT2 subfamily. Heterodimer of a catalytic subunit and an accessory subunit. It depends on Zn(2+) as a cofactor.

Its subcellular location is the cytoplasm. Non-catalytic subunit of the queuine tRNA-ribosyltransferase (TGT) that catalyzes the base-exchange of a guanine (G) residue with queuine (Q) at position 34 (anticodon wobble position) in tRNAs with GU(N) anticodons (tRNA-Asp, -Asn, -His and -Tyr), resulting in the hypermodified nucleoside queuosine (7-(((4,5-cis-dihydroxy-2-cyclopenten-1-yl)amino)methyl)-7-deazaguanosine). In Trichoplax adhaerens (Trichoplax reptans), this protein is Queuine tRNA-ribosyltransferase accessory subunit 2.